The sequence spans 255 residues: Ribonuclease HII (255 aa).

Positions 72–255 (RLIAGIDEVG…RTFAPIKDMI (184 aa)) constitute an RNase H type-2 domain. A divalent metal cation is bound by residues aspartate 78, glutamate 79, and aspartate 170.

Belongs to the RNase HII family. Mn(2+) is required as a cofactor. The cofactor is Mg(2+).

The protein resides in the cytoplasm. It carries out the reaction Endonucleolytic cleavage to 5'-phosphomonoester.. Endonuclease that specifically degrades the RNA of RNA-DNA hybrids. The polypeptide is Ribonuclease HII (Enterococcus faecalis (strain ATCC 700802 / V583)).